The chain runs to 373 residues: RNA 3'-terminal phosphate cyclase-like protein (373 aa).

Belongs to the RNA 3'-terminal cyclase family. Type 2 subfamily. As to quaternary structure, part of the small subunit (SSU) processome, composed of more than 70 proteins and the RNA chaperone small nucleolar RNA (snoRNA) U3. Interacts with BMS1.

Its subcellular location is the nucleus. It is found in the nucleolus. Its function is as follows. As part of the small subunit (SSU) processome, it plays a role in 40S-ribosomal-subunit biogenesis in the early pre-rRNA processing steps at sites A0, A1 and A2 that are required for proper maturation of the 18S RNA. Activates BMS1 by promoting GDP/GTP exchange. Does not have cyclase activity. In Homo sapiens (Human), this protein is RNA 3'-terminal phosphate cyclase-like protein.